The following is a 115-amino-acid chain: Replication initiation control protein YabA (115 aa).

Positions 90, 92, 106, and 109 each coordinate Zn(2+).

The protein belongs to the YabA family. As to quaternary structure, homotetramer. Interacts with both DnaA and DnaN, acting as a bridge between these two proteins. Requires Zn(2+) as cofactor.

It is found in the cytoplasm. The protein resides in the nucleoid. Functionally, involved in control of chromosome replication initiation. Inhibits the cooperative binding of DnaA to the oriC region, thus negatively regulating initiation of chromosome replication. Inhibits the ability of DnaA-ATP to form a helix on DNA; does not disassemble preformed DnaA-DNA helices. Decreases the residence time of DnaA on the chromosome at its binding sites (oriC, replication forks and promoter-binding sites). Tethers DnaA to the replication machinery via the DNA polymerase beta sliding clamp subunit (dnaN). Associates with oriC and other DnaA targets on the chromosome in a DnaA-dependent manner. This Staphylococcus aureus (strain JH1) protein is Replication initiation control protein YabA.